The chain runs to 279 residues: Proteasome subunit beta (279 aa).

Positions 1-53 (MAAAFDPSGRLPDLFTSAGTSSFSAFLSMAAPELLPGRRPLPPGTAADLTPHA) are cleaved as a propeptide — removed in mature form; by autocatalysis. The active-site Nucleophile is Thr-54.

The protein belongs to the peptidase T1B family. The 20S proteasome core is composed of 14 alpha and 14 beta subunits that assemble into four stacked heptameric rings, resulting in a barrel-shaped structure. The two inner rings, each composed of seven catalytic beta subunits, are sandwiched by two outer rings, each composed of seven alpha subunits. The catalytic chamber with the active sites is on the inside of the barrel. Has a gated structure, the ends of the cylinder being occluded by the N-termini of the alpha-subunits. Is capped by the proteasome-associated ATPase, ARC.

It localises to the cytoplasm. The catalysed reaction is Cleavage of peptide bonds with very broad specificity.. It functions in the pathway protein degradation; proteasomal Pup-dependent pathway. With respect to regulation, the formation of the proteasomal ATPase ARC-20S proteasome complex, likely via the docking of the C-termini of ARC into the intersubunit pockets in the alpha-rings, may trigger opening of the gate for substrate entry. Interconversion between the open-gate and close-gate conformations leads to a dynamic regulation of the 20S proteasome proteolysis activity. In terms of biological role, component of the proteasome core, a large protease complex with broad specificity involved in protein degradation. This Salinispora arenicola (strain CNS-205) protein is Proteasome subunit beta.